The following is a 188-amino-acid chain: Achaete-scute homolog 5 (188 aa).

Positions 80-93 (AFIQKRNERERQRV) are basic motif. The bHLH domain occupies 80 to 132 (AFIQKRNERERQRVKCVNEGYARLRGHLPGALTEKRLSKVETLRAAIRYIKYL). The interval 94–132 (KCVNEGYARLRGHLPGALTEKRLSKVETLRAAIRYIKYL) is helix-loop-helix motif. Residues 139–188 (TPDGAPPPATSPPPAHTGHSNVPQPSSLVAESSGSPFSSSPFLESEEPSL) form a disordered region. Positions 142-153 (GAPPPATSPPPA) are enriched in pro residues. Residues 158–168 (SNVPQPSSLVA) show a composition bias toward polar residues. A compositionally biased stretch (low complexity) spans 169 to 181 (ESSGSPFSSSPFL).

In terms of assembly, interacts with transcription factor TCF3/E12. Expressed in teeth (at protein level).

Its subcellular location is the nucleus. Functionally, transcription factor. Probably binds E-box motifs 5'-CANNTG-3' in complex with transcription factor TCF3/E12. Negatively modulates transcription of target genes such as CDH1/E-cadherin, perhaps by recruiting the PRC2 repressive complex to regulatory elements. Regulates ameloblast development and tooth germ growth, perhaps acting by positively modulating migration of inner enamel epithelium (IEE) cells. Plays a role in enamel formation. In Mus musculus (Mouse), this protein is Achaete-scute homolog 5.